The sequence spans 525 residues: GMP synthase [glutamine-hydrolyzing] (525 aa).

The Glutamine amidotransferase type-1 domain occupies 9–207 (RILILDFGSQ…VLQICQCEPL (199 aa)). C86 serves as the catalytic Nucleophile. Active-site residues include H181 and E183. The 193-residue stretch at 208–400 (WTPRNIIDQT…LGLPNAMLHR (193 aa)) folds into the GMPS ATP-PPase domain. 235-241 (SGGVDSA) serves as a coordination point for ATP.

In terms of assembly, homodimer.

It catalyses the reaction XMP + L-glutamine + ATP + H2O = GMP + L-glutamate + AMP + diphosphate + 2 H(+). The protein operates within purine metabolism; GMP biosynthesis; GMP from XMP (L-Gln route): step 1/1. Functionally, catalyzes the synthesis of GMP from XMP. The chain is GMP synthase [glutamine-hydrolyzing] from Hamiltonella defensa subsp. Acyrthosiphon pisum (strain 5AT).